A 514-amino-acid polypeptide reads, in one-letter code: 2,3-bisphosphoglycerate-independent phosphoglycerate mutase (514 aa).

The Mn(2+) site is built by Asp-14 and Ser-64. The active-site Phosphoserine intermediate is the Ser-64. Substrate is bound by residues His-125, 155–156 (RD), Arg-187, Arg-193, 263–266 (RADR), and Lys-336. Residues Asp-403, His-407, Asp-444, His-445, and His-463 each contribute to the Mn(2+) site.

Belongs to the BPG-independent phosphoglycerate mutase family. In terms of assembly, monomer. Mn(2+) serves as cofactor.

The enzyme catalyses (2R)-2-phosphoglycerate = (2R)-3-phosphoglycerate. It functions in the pathway carbohydrate degradation; glycolysis; pyruvate from D-glyceraldehyde 3-phosphate: step 3/5. Its function is as follows. Catalyzes the interconversion of 2-phosphoglycerate and 3-phosphoglycerate. The protein is 2,3-bisphosphoglycerate-independent phosphoglycerate mutase of Shewanella putrefaciens (strain CN-32 / ATCC BAA-453).